A 611-amino-acid chain; its full sequence is Elongation factor 4 (611 aa).

Residues 12-194 (SRIRNFSIIA…QIVEKVPAPA (183 aa)) form the tr-type G domain. GTP is bound by residues 24-29 (DHGKST) and 141-144 (NKID).

Belongs to the TRAFAC class translation factor GTPase superfamily. Classic translation factor GTPase family. LepA subfamily.

It localises to the cell membrane. It carries out the reaction GTP + H2O = GDP + phosphate + H(+). In terms of biological role, required for accurate and efficient protein synthesis under certain stress conditions. May act as a fidelity factor of the translation reaction, by catalyzing a one-codon backward translocation of tRNAs on improperly translocated ribosomes. Back-translocation proceeds from a post-translocation (POST) complex to a pre-translocation (PRE) complex, thus giving elongation factor G a second chance to translocate the tRNAs correctly. Binds to ribosomes in a GTP-dependent manner. The chain is Elongation factor 4 from Bacillus velezensis (strain DSM 23117 / BGSC 10A6 / LMG 26770 / FZB42) (Bacillus amyloliquefaciens subsp. plantarum).